The following is a 189-amino-acid chain: Protein GrpE (189 aa).

Over residues 1–10 (MADEQQQTLD) the composition is skewed to polar residues. The segment at 1–21 (MADEQQQTLDPQAPEQTDAPE) is disordered.

The protein belongs to the GrpE family. Homodimer.

It localises to the cytoplasm. In terms of biological role, participates actively in the response to hyperosmotic and heat shock by preventing the aggregation of stress-denatured proteins, in association with DnaK and GrpE. It is the nucleotide exchange factor for DnaK and may function as a thermosensor. Unfolded proteins bind initially to DnaJ; upon interaction with the DnaJ-bound protein, DnaK hydrolyzes its bound ATP, resulting in the formation of a stable complex. GrpE releases ADP from DnaK; ATP binding to DnaK triggers the release of the substrate protein, thus completing the reaction cycle. Several rounds of ATP-dependent interactions between DnaJ, DnaK and GrpE are required for fully efficient folding. This is Protein GrpE from Pseudomonas paraeruginosa (strain DSM 24068 / PA7) (Pseudomonas aeruginosa (strain PA7)).